The primary structure comprises 332 residues: UPF0194 membrane protein YbhG (332 aa).

Residues 1–16 (MMKKPVVIGLAVVVLA) form the signal peptide. The stretch at 107–209 (NEEIAQAAAA…LNLQDSTLIA (103 aa)) forms a coiled coil.

This sequence belongs to the UPF0194 family.

Its subcellular location is the periplasm. The chain is UPF0194 membrane protein YbhG from Escherichia coli (strain K12 / MC4100 / BW2952).